The primary structure comprises 332 residues: Glyceraldehyde-3-phosphate dehydrogenase 1 (332 aa).

NAD(+)-binding positions include 11-12 (RI), Asp-32, and Arg-77. D-glyceraldehyde 3-phosphate is bound by residues 148 to 150 (SCT), Thr-179, 208 to 209 (TG), and Arg-231. The Nucleophile role is filled by Cys-149. Asn-313 contacts NAD(+).

The protein belongs to the glyceraldehyde-3-phosphate dehydrogenase family. As to quaternary structure, homotetramer.

The protein localises to the cytoplasm. The enzyme catalyses D-glyceraldehyde 3-phosphate + phosphate + NAD(+) = (2R)-3-phospho-glyceroyl phosphate + NADH + H(+). Its pathway is carbohydrate degradation; glycolysis; pyruvate from D-glyceraldehyde 3-phosphate: step 1/5. This is Glyceraldehyde-3-phosphate dehydrogenase 1 (Gapdh1) from Drosophila melanogaster (Fruit fly).